A 439-amino-acid chain; its full sequence is Beta-1,3-galactosyl-O-glycosyl-glycoprotein beta-1,6-N-acetylglucosaminyltransferase (439 aa).

Residues 1-11 lie on the Cytoplasmic side of the membrane; it reads MVGWKKKKLCR. A helical; Signal-anchor for type II membrane protein transmembrane segment spans residues 12-29; that stretch reads GHHLWVLGCYMLLAVVSL. The Lumenal segment spans residues 30–439; it reads RLSLRFKCDV…RHKAIYGTEL (410 aa). Asparagine 71 and asparagine 107 each carry an N-linked (GlcNAc...) asparagine; by host glycan. Intrachain disulfides connect cysteine 72–cysteine 229, cysteine 163–cysteine 383, cysteine 184–cysteine 211, and cysteine 392–cysteine 424.

This sequence belongs to the glycosyltransferase 14 family.

The protein localises to the host Golgi apparatus membrane. It catalyses the reaction a 3-O-[beta-D-galactosyl-(1-&gt;3)-N-acetyl-alpha-D-galactosaminyl]-L-seryl-[protein] + UDP-N-acetyl-alpha-D-glucosamine = 3-O-{beta-D-galactosyl-(1-&gt;3)-[N-acetyl-beta-D-glucosaminyl-(1-&gt;6)]-N-acetyl-alpha-D-galactosaminyl}-L-seryl-[protein] + UDP + H(+). The enzyme catalyses a 3-O-[beta-D-galactosyl-(1-&gt;3)-N-acetyl-alpha-D-galactosaminyl]-L-threonyl-[protein] + UDP-N-acetyl-alpha-D-glucosamine = a 3-O-{beta-D-galactosyl-(1-&gt;3)-[N-acetyl-beta-D-glucosaminyl-(1-&gt;6)]-N-acetyl-alpha-D-galactosaminyl}-L-threonyl-[protein] + UDP + H(+). It carries out the reaction a beta-D-Gal-(1-&gt;4)-beta-D-GlcNAc-(1-&gt;3)-beta-D-Gal-(1-&gt;4)-beta-D-GlcNAc derivative + UDP-N-acetyl-alpha-D-glucosamine = a beta-D-Gal-(1-&gt;4)-beta-D-GlcNAc-(1-&gt;3)-[beta-D-GlcNAc-(1-&gt;6)]-beta-D-Gal-(1-&gt;4)-N-acetyl-beta-D-glucosaminyl derivative + UDP + H(+). The catalysed reaction is 3-O-[N-acetyl-beta-D-glucosaminyl-(1-&gt;3)-N-acetyl-alpha-D-galactosaminyl]-L-seryl-[protein] + UDP-N-acetyl-alpha-D-glucosamine = 3-O-[N-acetyl-beta-D-glucosaminyl-(1-&gt;3)-[N-acetyl-beta-D-glucosaminyl-(1-&gt;6)]-N-acetyl-alpha-D-galactosaminyl]-L-seryl-[protein] + UDP + H(+). It catalyses the reaction a 3-O-[N-acetyl-beta-D-glucosaminyl-(1-&gt;3)-N-acetyl-alpha-D-galactosaminyl]-L-threonyl-[protein] + UDP-N-acetyl-alpha-D-glucosamine = 3-O-[N-acetyl-beta-D-glucosaminyl-(1-&gt;3)-[N-acetyl-beta-D-glucosaminyl-(1-&gt;6)]-N-acetyl-alpha-D-galactosaminyl]-L-threonyl-[protein] + UDP + H(+). Its pathway is protein modification; protein glycosylation. Its function is as follows. Non-essential glycosyltransferase that can synthesize all known mucin beta 6 N-acetylglucosaminides. Mediates core 2 and core 4 O-glycan branching, 2 important steps in mucin-type biosynthesis. Has also I-branching enzyme activity by converting linear into branched poly-N-acetyllactosaminoglycans. Contributes to the post-translational modifications of structural proteins. The protein is Beta-1,3-galactosyl-O-glycosyl-glycoprotein beta-1,6-N-acetylglucosaminyltransferase (Bo17) of Bovine herpesvirus 4 (BoHV-4).